The following is a 321-amino-acid chain: GDP-L-fucose synthase (321 aa).

An NADP(+)-binding site is contributed by 14–20; that stretch reads GGSGLVG. Tyrosine 143 functions as the Proton donor/acceptor in the catalytic mechanism. NADP(+)-binding positions include lysine 147, 170–173, and histidine 186; that span reads PTNV. Lysine 194, tryptophan 208, arginine 215, and aspartate 277 together coordinate substrate.

Belongs to the NAD(P)-dependent epimerase/dehydratase family. Fucose synthase subfamily. As to quaternary structure, homodimer.

The catalysed reaction is GDP-beta-L-fucose + NADP(+) = GDP-4-dehydro-alpha-D-rhamnose + NADPH + H(+). Its pathway is nucleotide-sugar biosynthesis; GDP-L-fucose biosynthesis via de novo pathway; GDP-L-fucose from GDP-alpha-D-mannose: step 2/2. In terms of biological role, catalyzes the two-step NADP-dependent conversion of GDP-4-dehydro-6-deoxy-D-mannose to GDP-fucose, involving an epimerase and a reductase reaction. The polypeptide is GDP-L-fucose synthase (GFUS) (Cricetulus griseus (Chinese hamster)).